Reading from the N-terminus, the 186-residue chain is Ribosome-recycling factor (186 aa).

This sequence belongs to the RRF family.

It is found in the cytoplasm. Responsible for the release of ribosomes from messenger RNA at the termination of protein biosynthesis. May increase the efficiency of translation by recycling ribosomes from one round of translation to another. This is Ribosome-recycling factor from Phocaeicola vulgatus (strain ATCC 8482 / DSM 1447 / JCM 5826 / CCUG 4940 / NBRC 14291 / NCTC 11154) (Bacteroides vulgatus).